The primary structure comprises 166 residues: Ribosome maturation factor RimM (166 aa).

Residues 91–163 (EDEFYEFQLI…KMQITPPEGW (73 aa)) form the PRC barrel domain.

This sequence belongs to the RimM family. As to quaternary structure, binds ribosomal protein uS19.

The protein localises to the cytoplasm. An accessory protein needed during the final step in the assembly of 30S ribosomal subunit, possibly for assembly of the head region. Essential for efficient processing of 16S rRNA. May be needed both before and after RbfA during the maturation of 16S rRNA. It has affinity for free ribosomal 30S subunits but not for 70S ribosomes. The sequence is that of Ribosome maturation factor RimM from Sulfurihydrogenibium sp. (strain YO3AOP1).